A 1184-amino-acid polypeptide reads, in one-letter code: MFQLRNFEAIKIGLASPEKIREWSRGEVKKPETINYRTLKPERDGLFCERIFGPTKDWECHCGKYKRVRYKGVVCDRCGVEVTRSKVRRERMGHIELAAPVAHIWYVKGIPSRMGLLLDMSPRALEKVLYFVSYVVIDPGDTPLTKKQLLSEKEYREYLDKYGNKFRAGMGAEAIKELLQEIDLEKLSKELKAEIRESTGQKRVRAIRRLEVVQAFIDSGNRPEWMILDVIPVIPPDLRPMVQLDGGRFATSDLNDLYRRVINRNNRLKKLLDLGAPDIIVRNEKRMLQEAVDALIDNGRRGRPVTGPGNRPLKSLSDMLKGKQGRFRQNLLGKRVDYSGRSVIVVGPELKVYQCGLPKEMALELFKPFVMKKLVDEGLAQHIKSAKRMVEKIKPEVWDVLEEVIKEHPVLLNRAPTLHRLGIQAFEPVLVEGRAIKLHPLVCTAYNADFDGDQMAVHVPLSMEAQAEARFLMLAANNILKPQDGKPVMTPTQDMVLGCYYLTADEEGVQGEGKYFSSPEEAITAYQLGYIHIHAKIKVKMTKEIDGVKKSKIIETTVGKIIFNEAIPQDLGYVDRTNPETAFDLEINDLVDKSKLGKILDRVYRLHGPTKTAETLDKIKELGFRYSTKAAITVSVSDMVIPKEKEKLLKEADEMVSKIESQFRRGLISEEERYESIIRTWNMTTEKVTEALMTSLDKFNPIFMMAHSGARGSKNQIRQLAGMRGLMADPSGRIIELPIRSNFREGLNVLEFFISTHGARKGLADTALRTADSGYLTRRLVDVSQDVIVREEDCGTDEGIYVEEIREGNEIIERLADRIIGRVAAEDVVDNEGKIIVRRNELINEEEAEKIEKAGITKVKIRSLLTCKSRHGVCRMCYGRDLATGELVNIGEAVGIIAAQAIGEPGTQLTMRTFHTGGVAGSDITQGLPRVEELFEARKPKGLAVISEISGVVRINESKKRREVIVTDEENSISKTYLIPYGSRLKVHDGQVIQAGDELTEGSVNPHDLLKIKGIFAVQTYLLQEVQKVYRLQGVEINDKHIEVIIRQMMRKVKVEDPGDTSMLPGELIDMFKFEEENKKAVEKGLKPATGRRALLGITKAALATDSFLSAASFQETTRVLTDAAIKGKVDPLLGLKENVIIGKLIPAGTGLSRYRNISVVKKVKDQQDAQDKEKEEAEVKASN.

Residues Cys60, Cys62, Cys75, and Cys78 each coordinate Zn(2+). Mg(2+) is bound by residues Asp449, Asp451, and Asp453. Zn(2+) contacts are provided by Cys794, Cys867, Cys874, and Cys877.

This sequence belongs to the RNA polymerase beta' chain family. In terms of assembly, the RNAP catalytic core consists of 2 alpha, 1 beta, 1 beta' and 1 omega subunit. When a sigma factor is associated with the core the holoenzyme is formed, which can initiate transcription. It depends on Mg(2+) as a cofactor. Zn(2+) serves as cofactor.

The enzyme catalyses RNA(n) + a ribonucleoside 5'-triphosphate = RNA(n+1) + diphosphate. Functionally, DNA-dependent RNA polymerase catalyzes the transcription of DNA into RNA using the four ribonucleoside triphosphates as substrates. The polypeptide is DNA-directed RNA polymerase subunit beta' (Thermoanaerobacter sp. (strain X514)).